The primary structure comprises 254 residues: MSSEVAARRDAKKLVRSPSGLRMVPEHRAYGSPFGLEEPPWVPDKECPRCMQCDTKFDFLTRKHHCRRCGKCFCDKCCGQKVALRRMCFVDPVRQCAGCAPVSRREADFYDRQLKLLLSGATFLVTFENSEKPDTMVCRLSSNQRFLLLDGDGDGDGHREVEVARIAAVQMLTEGLPPGDTLSHTSLPASRPAAEGGNARAIGMTLQYTTPGAEGLTQLTLTAGEDADGSRRQATAWLAAMHKAAKLLYESRDQ.

The FYVE-type zinc finger occupies Asp-44–Arg-104. Positions 50, 53, 66, 69, 74, 77, 96, and 99 each coordinate Zn(2+). Positions Ala-107 to Gln-254 are PH-like.

As to quaternary structure, interacts with PTK2/FAK1.

Its subcellular location is the cell junction. It is found in the focal adhesion. The protein localises to the cytoplasmic vesicle. It localises to the endosome. In terms of biological role, plays a role in cell adhesion, and thereby in cell motility which requires repeated formation and disassembly of focal adhesions. Regulates microtubule-induced PTK2/FAK1 dephosphorylation, an event important for focal adhesion disassembly, as well as integrin beta-1/ITGB1 cell surface expression. The polypeptide is Zinc finger FYVE domain-containing protein 21 (ZFYVE21) (Bos taurus (Bovine)).